Reading from the N-terminus, the 589-residue chain is Protein PAF1 homolog (589 aa).

Residues 1 to 54 (MASYRPPYPPLPQPPSQNSLAPPPPPPSLPPPVPPPPPSHQPYSYPPPPPPPPH) show a composition bias toward pro residues. Disordered stretches follow at residues 1 to 180 (MASY…PLLT) and 542 to 589 (GVYS…DYSE). Residues 55-65 (AYYQQGPHYPQ) are compositionally biased toward low complexity. Over residues 71 to 87 (APPPPPPPSAPPPLVPD) the composition is skewed to pro residues. The span at 88 to 116 (PPRHQGPNDHEKGASKQVGRRERAKPDPS) shows a compositional bias: basic and acidic residues. The span at 117–127 (KHHHRSHLPHS) shows a compositional bias: basic residues. Residues 126–159 (HSKKIETEEERRLRKKRELEKQRQDEKHRQQMKN) adopt a coiled-coil conformation. Over residues 128–154 (KKIETEEERRLRKKRELEKQRQDEKHR) the composition is skewed to basic and acidic residues.

Belongs to the PAF1 family. In terms of assembly, component of the nuclear PAF1 complex (PAF1C), which consists of VIP2/ELF7/PAF1, VIP3/SKI8/WDR61, VIP4/LEO1, VIP5/RTF1, VIP6/ELF8/CTR9 and CDC73. In terms of tissue distribution, expressed in roots, leaves and shoot apex.

The protein localises to the nucleus. Functionally, component of the PAF1 complex (PAF1C) which is involved in histone modifications such as methylation on histone H3 'Lys-4' (H3K4me3). Involved in regulation of flowering time. Required for the expression of the flowering repressors and MAD-box genes FLC, AGL27/FLM and AGL31/MAF2. Required for histone H3 trimethylation on 'Lys-4' H3K4me3 at the FLC and AGL27/FLM loci. Involved in the control of seed dormancy and germination. The sequence is that of Protein PAF1 homolog from Arabidopsis thaliana (Mouse-ear cress).